The primary structure comprises 100 residues: Co-chaperonin GroES (100 aa).

This sequence belongs to the GroES chaperonin family. As to quaternary structure, heptamer of 7 subunits arranged in a ring. Interacts with the chaperonin GroEL.

The protein resides in the cytoplasm. Functionally, together with the chaperonin GroEL, plays an essential role in assisting protein folding. The GroEL-GroES system forms a nano-cage that allows encapsulation of the non-native substrate proteins and provides a physical environment optimized to promote and accelerate protein folding. GroES binds to the apical surface of the GroEL ring, thereby capping the opening of the GroEL channel. This Mycobacterium marinum (strain ATCC BAA-535 / M) protein is Co-chaperonin GroES.